Here is a 425-residue protein sequence, read N- to C-terminus: Melibiose permease (425 aa).

At 1–13 the chain is on the cytoplasmic side; that stretch reads MNTTTCTHKDNPN. Residues 14 to 34 traverse the membrane as a helical segment; that stretch reads FWIFGLFFFLYFFIMATCFPF. Over 35 to 50 the chain is Periplasmic; the sequence is LPIWLSDIIGLNKTHT. The helical transmembrane segment at 51-71 threads the bilayer; that stretch reads GIVFSCISLSAIAFQPVLGVI. Topologically, residues 72 to 80 are cytoplasmic; the sequence is SDKLGLKKH. A helical transmembrane segment spans residues 81-101; it reads LLWIISVLLFLFAPFFLYVFA. At 102–107 the chain is on the periplasmic side; the sequence is PLLKTN. A helical membrane pass occupies residues 108-128; that stretch reads IWLGALSGGLYIGFVFSAGSG. The Cytoplasmic segment spans residues 129 to 149; sequence AIEAYIERVSRNSAFEYGKAR. The chain crosses the membrane as a helical span at residues 150–170; the sequence is MFGCLGWGLCASTGGILFGID. Position 171 (Pro-171) is a topological domain, periplasmic. The helical transmembrane segment at 172 to 192 threads the bilayer; that stretch reads SYVFWMGSAAALLLMLLLVVA. Residues 193–227 are Cytoplasmic-facing; sequence KPKPNQTAQVMNALGANQPQITAKKVFNLFRQRRM. A helical transmembrane segment spans residues 228–248; sequence WMFILYVIGVACVYDVFDQQF. Topologically, residues 249 to 267 are periplasmic; it reads ATFFKTFFATPQEGTRAFG. A helical membrane pass occupies residues 268–288; it reads FATTAGEICNAIIMFCSPWII. The Cytoplasmic portion of the chain corresponds to 289-297; the sequence is NRIGAKNTL. A helical transmembrane segment spans residues 298 to 318; the sequence is LIAGLIMATRIIGSSFATTAV. The Periplasmic portion of the chain corresponds to 319–325; that stretch reads EVIALKM. Residues 326 to 346 form a helical membrane-spanning segment; sequence LHALEVPFLLVGAFKYITGVF. Topologically, residues 347–353 are cytoplasmic; sequence DTRLSAT. The helical transmembrane segment at 354 to 374 threads the bilayer; that stretch reads IYLIGFQFAKQSAAIFLSAFA. Topologically, residues 375-385 are periplasmic; that stretch reads GNMYDRIGFQE. Residues 386-406 traverse the membrane as a helical segment; it reads TYLMLGCFVLAITVVSAFTLS. Over 407-425 the chain is Cytoplasmic; it reads SRQEIAAAAGAAALTSQSR.

The protein belongs to the major facilitator superfamily. Oligosaccharide:H(+) symporter (OHS) (TC 2.A.1.5) family.

The protein localises to the cell inner membrane. Functionally, responsible for transport of melibiose into the cell, with the concomitant import of a proton (symport system). Can also transport lactose, and has weak activity with maltose. Cannot transport the analog methyl-1-thio-beta,D-galactopyranoside (TMG). This Enterobacter cloacae subsp. cloacae (strain ATCC 13047 / DSM 30054 / NBRC 13535 / NCTC 10005 / WDCM 00083 / NCDC 279-56) protein is Melibiose permease.